Reading from the N-terminus, the 322-residue chain is Phosphatidylserine decarboxylase proenzyme (322 aa).

Catalysis depends on charge relay system; for autoendoproteolytic cleavage activity residues aspartate 90, histidine 147, and serine 254. Serine 254 functions as the Schiff-base intermediate with substrate; via pyruvic acid; for decarboxylase activity in the catalytic mechanism. At serine 254 the chain carries Pyruvic acid (Ser); by autocatalysis. Residues 293–322 form a disordered region; it reads PDAEPAPLPAEEIEAEHDASPLVDDKKDQV. Residues 308–322 are compositionally biased toward basic and acidic residues; sequence EHDASPLVDDKKDQV.

The protein belongs to the phosphatidylserine decarboxylase family. PSD-B subfamily. Prokaryotic type I sub-subfamily. In terms of assembly, heterodimer of a large membrane-associated beta subunit and a small pyruvoyl-containing alpha subunit. It depends on pyruvate as a cofactor. Post-translationally, is synthesized initially as an inactive proenzyme. Formation of the active enzyme involves a self-maturation process in which the active site pyruvoyl group is generated from an internal serine residue via an autocatalytic post-translational modification. Two non-identical subunits are generated from the proenzyme in this reaction, and the pyruvate is formed at the N-terminus of the alpha chain, which is derived from the carboxyl end of the proenzyme. The autoendoproteolytic cleavage occurs by a canonical serine protease mechanism, in which the side chain hydroxyl group of the serine supplies its oxygen atom to form the C-terminus of the beta chain, while the remainder of the serine residue undergoes an oxidative deamination to produce ammonia and the pyruvoyl prosthetic group on the alpha chain. During this reaction, the Ser that is part of the protease active site of the proenzyme becomes the pyruvoyl prosthetic group, which constitutes an essential element of the active site of the mature decarboxylase.

It is found in the cell membrane. The catalysed reaction is a 1,2-diacyl-sn-glycero-3-phospho-L-serine + H(+) = a 1,2-diacyl-sn-glycero-3-phosphoethanolamine + CO2. Its pathway is phospholipid metabolism; phosphatidylethanolamine biosynthesis; phosphatidylethanolamine from CDP-diacylglycerol: step 2/2. In terms of biological role, catalyzes the formation of phosphatidylethanolamine (PtdEtn) from phosphatidylserine (PtdSer). The chain is Phosphatidylserine decarboxylase proenzyme from Escherichia coli (strain 55989 / EAEC).